The sequence spans 217 residues: Ribonuclease HII (217 aa).

In terms of domain architecture, RNase H type-2 spans 34-217 (WPVAGTDEAG…RMSFRPLKRD (184 aa)). The a divalent metal cation site is built by Asp-40, Glu-41, and Asp-131.

This sequence belongs to the RNase HII family. The cofactor is Mn(2+). Mg(2+) is required as a cofactor.

It localises to the cytoplasm. The catalysed reaction is Endonucleolytic cleavage to 5'-phosphomonoester.. In terms of biological role, endonuclease that specifically degrades the RNA of RNA-DNA hybrids. This is Ribonuclease HII from Agrobacterium fabrum (strain C58 / ATCC 33970) (Agrobacterium tumefaciens (strain C58)).